A 100-amino-acid polypeptide reads, in one-letter code: Aspartyl/glutamyl-tRNA(Asn/Gln) amidotransferase subunit C (100 aa).

This sequence belongs to the GatC family. As to quaternary structure, heterotrimer of A, B and C subunits.

The catalysed reaction is L-glutamyl-tRNA(Gln) + L-glutamine + ATP + H2O = L-glutaminyl-tRNA(Gln) + L-glutamate + ADP + phosphate + H(+). The enzyme catalyses L-aspartyl-tRNA(Asn) + L-glutamine + ATP + H2O = L-asparaginyl-tRNA(Asn) + L-glutamate + ADP + phosphate + 2 H(+). Functionally, allows the formation of correctly charged Asn-tRNA(Asn) or Gln-tRNA(Gln) through the transamidation of misacylated Asp-tRNA(Asn) or Glu-tRNA(Gln) in organisms which lack either or both of asparaginyl-tRNA or glutaminyl-tRNA synthetases. The reaction takes place in the presence of glutamine and ATP through an activated phospho-Asp-tRNA(Asn) or phospho-Glu-tRNA(Gln). The sequence is that of Aspartyl/glutamyl-tRNA(Asn/Gln) amidotransferase subunit C from Rickettsia rickettsii (strain Sheila Smith).